The primary structure comprises 339 residues: Sperm acrosome membrane-associated protein 6 (339 aa).

Positions 1–41 (MTSQRSLSSPQTRRPSVMGLISLVGSIVLLFLLIFRASTWA) are cleaved as a signal peptide. Positions 42 to 45 (CLFC) match the CXXC motif motif. Disulfide bonds link Cys-42/Cys-155, Cys-45/Cys-158, Cys-56/Cys-70, Cys-140/Cys-163, Cys-144/Cys-169, and Cys-186/Cys-241. Residues 42–310 (CLFCFTTYEE…NPQALTLGNL (269 aa)) lie on the Extracellular side of the membrane. The short motif at 155 to 158 (CSGC) is the CXXC motif element. The region spanning 166–251 (PLDCPVQDML…VILHDQRPLA (86 aa)) is the Ig-like domain. The N-linked (GlcNAc...) asparagine glycan is linked to Asn-258. A helical membrane pass occupies residues 311-331 (FLLAATAALGSASVTLLVWLF). Topologically, residues 332–339 (FRWYLSGN) are cytoplasmic.

The protein belongs to the SPACA6 family. Forms a complex with IZUMO1 and TMEM81 on spermatocyte cell membrane required for fertilization. In terms of tissue distribution, highly expressed in testis. Minor expression also detected in epididymis, seminal vesicle and ovary. Predominantly expressed in testicular germ cells during spermiogenesis. Most abundant in round spermatids and detected at lower levels in elongating spermatids.

It localises to the cytoplasmic vesicle. It is found in the secretory vesicle. Its subcellular location is the acrosome membrane. Sperm protein required for fusion of sperm with the egg membrane during fertilization. May regulate the expression of sperm surface protein DCST2. This is Sperm acrosome membrane-associated protein 6 from Mus musculus (Mouse).